The following is a 795-amino-acid chain: Phenylalanine--tRNA ligase beta subunit (795 aa).

The region spanning 39-148 is the tRNA-binding domain; it reads AGAFHGVVVG…ADAPIGTDIR (110 aa). A B5 domain is found at 401–476; sequence PTRATITLRR…RIYGYNNIPN (76 aa). Mg(2+) contacts are provided by D454, D460, E463, and E464. An FDX-ACB domain is found at 701-794; sequence SRFPANRRDI…LKQRFQASLR (94 aa).

Belongs to the phenylalanyl-tRNA synthetase beta subunit family. Type 1 subfamily. As to quaternary structure, tetramer of two alpha and two beta subunits. The cofactor is Mg(2+).

The protein localises to the cytoplasm. It carries out the reaction tRNA(Phe) + L-phenylalanine + ATP = L-phenylalanyl-tRNA(Phe) + AMP + diphosphate + H(+). This chain is Phenylalanine--tRNA ligase beta subunit, found in Pectobacterium atrosepticum (strain SCRI 1043 / ATCC BAA-672) (Erwinia carotovora subsp. atroseptica).